Here is a 277-residue protein sequence, read N- to C-terminus: Formamidopyrimidine-DNA glycosylase (277 aa).

The active-site Schiff-base intermediate with DNA is the P2. The active-site Proton donor is the E3. Catalysis depends on K58, which acts as the Proton donor; for beta-elimination activity. Positions 94, 113, and 156 each coordinate DNA. An FPG-type zinc finger spans residues 241 to 277 (LVYGREGVPCPNCGAEHPIQRITQAGRSTFFCPTCQK). Residue R267 is the Proton donor; for delta-elimination activity of the active site.

The protein belongs to the FPG family. Monomer. Requires Zn(2+) as cofactor.

It catalyses the reaction Hydrolysis of DNA containing ring-opened 7-methylguanine residues, releasing 2,6-diamino-4-hydroxy-5-(N-methyl)formamidopyrimidine.. The enzyme catalyses 2'-deoxyribonucleotide-(2'-deoxyribose 5'-phosphate)-2'-deoxyribonucleotide-DNA = a 3'-end 2'-deoxyribonucleotide-(2,3-dehydro-2,3-deoxyribose 5'-phosphate)-DNA + a 5'-end 5'-phospho-2'-deoxyribonucleoside-DNA + H(+). Involved in base excision repair of DNA damaged by oxidation or by mutagenic agents. Acts as a DNA glycosylase that recognizes and removes damaged bases. Has a preference for oxidized purines, such as 7,8-dihydro-8-oxoguanine (8-oxoG). Has AP (apurinic/apyrimidinic) lyase activity and introduces nicks in the DNA strand. Cleaves the DNA backbone by beta-delta elimination to generate a single-strand break at the site of the removed base with both 3'- and 5'-phosphates. The chain is Formamidopyrimidine-DNA glycosylase from Gluconobacter oxydans (strain 621H) (Gluconobacter suboxydans).